The primary structure comprises 330 residues: Alpha-1,6-glucosyltransferase (330 aa).

This sequence belongs to the glycosyltransferase group 1 family. Does not require a metal cofactor. serves as cofactor.

It is found in the cytoplasm. Its pathway is protein modification; protein glycosylation. Functionally, catalyzes the transfer of a glucose moiety from UDP-glucose to another glucose that is N-linked to an asparagine within a peptide or protein. Can act in a repetitive manner, and this way it elongates the N-linked glucose by a glycan chain consisting of several alpha-1-&gt;6 linked glucose residues. Is able to add up to six glucose units in vitro. Cannot use UDP-Gal, UDP-GlcNAc or UDP-GalNAc as a substrate donor. The sequence is that of Alpha-1,6-glucosyltransferase from Actinobacillus pleuropneumoniae serotype 7 (strain AP76).